A 114-amino-acid polypeptide reads, in one-letter code: T cell receptor beta variable 28 (114 aa).

The first 26 residues, 1–26 (MGIRLLCRVAFCFLAVGLVDVKVTQS), serve as a signal peptide directing secretion. One can recognise an Ig-like domain in the interval 27–114 (SRYLVKRTGE…TSMYLCASSL (88 aa)). Residues cysteine 42 and cysteine 110 are joined by a disulfide bond. Residue asparagine 103 is glycosylated (N-linked (GlcNAc...) asparagine).

Alpha-beta TR is a heterodimer composed of an alpha and beta chain; disulfide-linked. The alpha-beta TR is associated with the transmembrane signaling CD3 coreceptor proteins to form the TR-CD3 (TcR or TCR). The assembly of alpha-beta TR heterodimers with CD3 occurs in the endoplasmic reticulum where a single alpha-beta TR heterodimer associates with one CD3D-CD3E heterodimer, one CD3G-CD3E heterodimer and one CD247 homodimer forming a stable octameric structure. CD3D-CD3E and CD3G-CD3E heterodimers preferentially associate with TR alpha and TR beta chains, respectively. The association of the CD247 homodimer is the last step of TcR assembly in the endoplasmic reticulum and is required for transport to the cell surface.

The protein localises to the cell membrane. In terms of biological role, v region of the variable domain of T cell receptor (TR) beta chain that participates in the antigen recognition. Alpha-beta T cell receptors are antigen specific receptors which are essential to the immune response and are present on the cell surface of T lymphocytes. Recognize peptide-major histocompatibility (MH) (pMH) complexes that are displayed by antigen presenting cells (APC), a prerequisite for efficient T cell adaptive immunity against pathogens. Binding of alpha-beta TR to pMH complex initiates TR-CD3 clustering on the cell surface and intracellular activation of LCK that phosphorylates the ITAM motifs of CD3G, CD3D, CD3E and CD247 enabling the recruitment of ZAP70. In turn ZAP70 phosphorylates LAT, which recruits numerous signaling molecules to form the LAT signalosome. The LAT signalosome propagates signal branching to three major signaling pathways, the calcium, the mitogen-activated protein kinase (MAPK) kinase and the nuclear factor NF-kappa-B (NF-kB) pathways, leading to the mobilization of transcription factors that are critical for gene expression and essential for T cell growth and differentiation. The T cell repertoire is generated in the thymus, by V-(D)-J rearrangement. This repertoire is then shaped by intrathymic selection events to generate a peripheral T cell pool of self-MH restricted, non-autoaggressive T cells. Post-thymic interaction of alpha-beta TR with the pMH complexes shapes TR structural and functional avidity. This Homo sapiens (Human) protein is T cell receptor beta variable 28.